A 315-amino-acid polypeptide reads, in one-letter code: Zinc metalloproteinase nas-4 (315 aa).

A signal peptide spans 1–20 (MMTIQRYSLVFCAIFATCWT). A glycan (N-linked (GlcNAc...) asparagine) is linked at Asn71. The 196-residue stretch at 95–290 (NAIKQIYRRW…RKINKLYNCP (196 aa)) folds into the Peptidase M12A domain. Cystine bridges form between Cys137–Cys289 and Cys160–Cys179. His187 contributes to the Zn(2+) binding site. The active site involves Glu188. Positions 191 and 197 each coordinate Zn(2+). Residues 291–315 (GVSGNNNNNNNNQINSNSIVNHPQV) form a disordered region.

Zn(2+) is required as a cofactor. As to expression, digestive tract. Found in the pharynx cells of the procorpus, metacorpus, isthmus and terminal bulb, and in the terminal bulb lumen.

Its subcellular location is the secreted. In terms of biological role, metalloprotease. May be involved in digestion. This chain is Zinc metalloproteinase nas-4 (nas-4), found in Caenorhabditis elegans.